The chain runs to 373 residues: Alanine racemase (373 aa).

The Proton acceptor; specific for D-alanine role is filled by K37. K37 is modified (N6-(pyridoxal phosphate)lysine). R135 serves as a coordination point for substrate. The active-site Proton acceptor; specific for L-alanine is the Y266. Position 313 (M313) interacts with substrate.

The protein belongs to the alanine racemase family. It depends on pyridoxal 5'-phosphate as a cofactor.

The catalysed reaction is L-alanine = D-alanine. It participates in amino-acid biosynthesis; D-alanine biosynthesis; D-alanine from L-alanine: step 1/1. Its function is as follows. Catalyzes the interconversion of L-alanine and D-alanine. This organism is able to use both L- and D-alanine as a nitrogen source. May also prevent D-alanine from interfering with the use of L-alanine. In Methanococcus maripaludis (strain DSM 14266 / JCM 13030 / NBRC 101832 / S2 / LL), this protein is Alanine racemase (alr).